Here is a 1581-residue protein sequence, read N- to C-terminus: Rho guanine nucleotide exchange factor 5 (1581 aa).

Disordered regions lie at residues 25 to 54 (EGIM…TDGH), 159 to 274 (VSKE…EQKQ), 316 to 643 (LRDS…RDGI), 659 to 700 (SEEF…PPTV), 741 to 810 (HSHP…PEFY), and 829 to 1051 (VPII…GSSD). A compositionally biased stretch (basic and acidic residues) spans 41-54 (QEDRDPSYKWTDGH). Polar residues predominate over residues 204–221 (KQLQLEATQENQGQEGFL). Acidic residues predominate over residues 228–241 (GLEEQEGQEVEIQE). 2 stretches are compositionally biased toward basic and acidic residues: residues 326 to 336 (QESREVEERRV) and 345 to 380 (RLVE…DSGD). Residue serine 446 is modified to Phosphoserine. Residues 474–492 (LDNRTHNSQQEEFRLRKGI) are compositionally biased toward basic and acidic residues. The segment covering 496–507 (SASTSVAPSGTR) has biased composition (polar residues). Over residues 515 to 531 (PNVFSSTATLSPVSSSV) the composition is skewed to low complexity. 5 stretches are compositionally biased toward polar residues: residues 569-595 (TSDT…NSFP), 603-613 (TPDSLGMSLSF), 662-685 (FTSN…QNSA), 748-760 (TLSS…SKGS), and 779-791 (TPES…TSIP). Pro residues predominate over residues 829-843 (VPIIDPSSEPPPLPP). 3 stretches are compositionally biased toward polar residues: residues 867–881 (PNNQ…SVGR), 889–905 (GRST…NNEV), and 912–925 (SNMT…SPTT). Phosphoserine occurs at positions 953 and 969. The span at 975–986 (KNSEKPLHHQLE) shows a compositional bias: basic and acidic residues. Residues serine 1029 and serine 1110 each carry the phosphoserine modification. The region spanning 1158-1342 (KLQEAKFELI…EKLIRDCNSN (185 aa)) is the DH domain. In terms of domain architecture, PH spans 1375 to 1488 (LVKSGELTAL…SALAMPREEL (114 aa)). An SH3 domain is found at 1494–1555 (YDSPQVQCLR…PVQQVEFISN (62 aa)).

Interacts with SRC. Forms a ternary complex with SRC and the PI3K 85 kDa subunit. Interacts with and is activated by the heterodimer formed by GNB1 and GNG2. Interacts with ODAM (via C-terminus). Interacts with RHOA. Activation of SRC induces tyrosine phosphorylation of ARHGEF5.

It is found in the nucleus. The protein localises to the cytoplasm. The protein resides in the cell projection. It localises to the podosome. Functionally, guanine nucleotide exchange factor which activates Rho GTPases. Strongly activates RHOA. Also strongly activates RHOB, weakly activates RHOC and RHOG and shows no effect on RHOD, RHOV, RHOQ or RAC1. Involved in regulation of cell shape and actin cytoskeletal organization. Plays a role in actin organization by generating a loss of actin stress fibers and the formation of membrane ruffles and filopodia. Required for SRC-induced podosome formation. Involved in positive regulation of immature dendritic cell migration. The polypeptide is Rho guanine nucleotide exchange factor 5 (Mus musculus (Mouse)).